The sequence spans 215 residues: Probable ribosome-binding factor A, chloroplastic (215 aa).

Residues 1–52 (MPNLLHTNQSHFFFLHHPPIYTVSSKTQAFHFPQSMAPVNLRTNLSVRRTVR) constitute a chloroplast transit peptide. Basic and acidic residues predominate over residues 183 to 192 (KGSGEGKTEP). Residues 183-210 (KGSGEGKTEPSDSTEDDQDWEVDDPDED) are disordered. The span at 194–210 (DSTEDDQDWEVDDPDED) shows a compositional bias: acidic residues.

This sequence belongs to the RbfA family.

It localises to the plastid. The protein resides in the chloroplast. This Arabidopsis thaliana (Mouse-ear cress) protein is Probable ribosome-binding factor A, chloroplastic.